The chain runs to 191 residues: Probable DNA-directed RNA polymerase subunit delta (191 aa).

Residues 14-83 enclose the HTH HARE-type domain; that stretch reads LSMIEVARAI…GENKWGLRSW (70 aa). Composition is skewed to acidic residues over residues 117–136 and 142–191; these read GDED…DFTE and EYDE…EEEV. A disordered region spans residues 117 to 191; it reads GDEDAIDYND…DEEEEEEEEV (75 aa).

The protein belongs to the RpoE family. As to quaternary structure, RNAP is composed of a core of 2 alpha, a beta and a beta' subunits. The core is associated with a delta subunit and one of several sigma factors.

Participates in both the initiation and recycling phases of transcription. In the presence of the delta subunit, RNAP displays an increased specificity of transcription, a decreased affinity for nucleic acids, and an increased efficiency of RNA synthesis because of enhanced recycling. In Streptococcus agalactiae serotype Ia (strain ATCC 27591 / A909 / CDC SS700), this protein is Probable DNA-directed RNA polymerase subunit delta.